Reading from the N-terminus, the 649-residue chain is Leucine-rich repeat transmembrane protein FLRT3 (649 aa).

The N-terminal stretch at 1–28 (MISAAWSIFLIGTKIGLFLQVAPLSVMA) is a signal peptide. The 30-residue stretch at 29-58 (KSCPSVCRCDAGFIYCNDRFLTSIPTGIPE) folds into the LRRNT domain. The Extracellular segment spans residues 29–528 (KSCPSVCRCD…KEPYKNPNLP (500 aa)). Disulfide bonds link Cys31–Cys37 and Cys35–Cys44. An interaction with ADGRL3 region spans residues 38 to 67 (DAGFIYCNDRFLTSIPTGIPEDATTLYLQN). LRR repeat units follow at residues 59–80 (DATTLYLQNNQINNAGIPSDLK), 84–104 (KVERIYLYHNSLDEFPTNLPK), 105–126 (YVKELHLQENNIRTITYDSLSK), 129–150 (YLEELHLDDNSVSAVSIEEGAF), 155–175 (YLRLLFLSRNHLSTIPWGLPR), 176–197 (TIEELRLDDNRISTISSPSLQG), 200–220 (SLKRLVLDGNLLNNHGLGDKV), 226–247 (NLTELSLVRNSLTAAPVNLPGT), 248–269 (NLRKLYLQDNHINRVPPNAFSY), and 272–293 (QLYRLDMSNNNLSNLPQGIFDD). The N-linked (GlcNAc...) asparagine glycan is linked to Asn226. 2 N-linked (GlcNAc...) asparagine glycosylation sites follow: Asn282 and Asn296. The region spanning 305–357 (NPWYCGCKMKWVRDWLQSLPVKVNVRGLMCQAPEKVRGMAIKDLNAELFDCKD) is the LRRCT domain. Cys309 and Cys334 are joined by a disulfide. Residues 387-407 (KQPDIKNPKLTKDHQTTGSPS) are disordered. Residues 389–401 (PDIKNPKLTKDHQ) show a composition bias toward basic and acidic residues. One can recognise a Fibronectin type-III domain in the interval 409-504 (KTITITVKSV…VCIETETAPL (96 aa)). A helical transmembrane segment spans residues 529–549 (LAAIIGGAVALVTIALLALVC). Topologically, residues 550 to 649 (WYVHRNGSLF…GIPDSDHSHS (100 aa)) are cytoplasmic. Residues 622-649 (LYKNNHSESSSNRSYRDSGIPDSDHSHS) are disordered.

As to quaternary structure, monomer and homodimer. Self-associates (via leucine-rich repeats), giving rise to homooligomers. Interacts with FGFR1. Interacts (via extracellular domain) with ADGRL1/LPHN1 and LPHN2 (via olfactomedin-like domain). Interacts (via extracellular domain) with ADGRL3 (via olfactomedin-like domain); the interaction is direct. Interacts (via extracellular domain) with UNC5B and UNC5D (via extracellular domain); the interaction is direct. Identified in complexes composed of FLRT3, ADGRL3 and UNC5B, respectively FLRT3, ADGRL3 and UNC5D. May also interact (via extracellular domain) with UNC5A and UNC5C. Interacts (via cytoplasmic domain) with ROBO1. Post-translationally, N-glycosylated. In terms of processing, proteolytic cleavage in the juxtamembrane region gives rise to a soluble ectodomain. Cleavage is probably effected by a metalloprotease. In terms of tissue distribution, expressed in kidney, brain, pancreas, skeletal muscle, lung, liver, placenta, and heart.

The protein localises to the cell membrane. Its subcellular location is the presynaptic cell membrane. The protein resides in the endoplasmic reticulum membrane. It is found in the cell junction. It localises to the focal adhesion. The protein localises to the secreted. Its subcellular location is the cell projection. The protein resides in the axon. It is found in the growth cone membrane. In terms of biological role, functions in cell-cell adhesion, cell migration and axon guidance, exerting an attractive or repulsive role depending on its interaction partners. Plays a role in the spatial organization of brain neurons. Plays a role in vascular development in the retina. Plays a role in cell-cell adhesion via its interaction with ADGRL3 and probably also other latrophilins that are expressed at the surface of adjacent cells. Interaction with the intracellular domain of ROBO1 mediates axon attraction towards cells expressing NTN1. Mediates axon growth cone collapse and plays a repulsive role in neuron guidance via its interaction with UNC5B, and possibly also other UNC-5 family members. Promotes neurite outgrowth (in vitro). Mediates cell-cell contacts that promote an increase both in neurite number and in neurite length. Plays a role in the regulation of the density of glutamaergic synapses. Plays a role in fibroblast growth factor-mediated signaling cascades. Required for normal morphogenesis during embryonic development, but not for normal embryonic patterning. Required for normal ventral closure, headfold fusion and definitive endoderm migration during embryonic development. Required for the formation of a normal basement membrane and the maintenance of a normal anterior visceral endoderm during embryonic development. This Homo sapiens (Human) protein is Leucine-rich repeat transmembrane protein FLRT3 (FLRT3).